A 58-amino-acid chain; its full sequence is Ribosome modulation factor (58 aa).

Belongs to the ribosome modulation factor family.

Its subcellular location is the cytoplasm. In terms of biological role, during stationary phase, converts 70S ribosomes to an inactive dimeric form (100S ribosomes). In Shewanella amazonensis (strain ATCC BAA-1098 / SB2B), this protein is Ribosome modulation factor.